A 162-amino-acid polypeptide reads, in one-letter code: Putative ureidoglycolate lyase (162 aa).

It belongs to the ureidoglycolate lyase family. As to quaternary structure, homodimer. The cofactor is Ni(2+).

It catalyses the reaction (S)-ureidoglycolate = urea + glyoxylate. It functions in the pathway nitrogen metabolism; (S)-allantoin degradation. In terms of biological role, catalyzes the catabolism of the allantoin degradation intermediate (S)-ureidoglycolate, generating urea and glyoxylate. Involved in the utilization of allantoin as nitrogen source. This chain is Putative ureidoglycolate lyase, found in Agrobacterium fabrum (strain C58 / ATCC 33970) (Agrobacterium tumefaciens (strain C58)).